The following is a 310-amino-acid chain: Biotin synthase (310 aa).

In terms of domain architecture, Radical SAM core spans 34-262; that stretch reads GRVQLCALVN…TAQIRLSAGR (229 aa). [4Fe-4S] cluster contacts are provided by Cys-49, Cys-53, and Cys-56. Positions 93, 125, 185, and 257 each coordinate [2Fe-2S] cluster.

This sequence belongs to the radical SAM superfamily. Biotin synthase family. In terms of assembly, homodimer. It depends on [4Fe-4S] cluster as a cofactor. The cofactor is [2Fe-2S] cluster.

It catalyses the reaction (4R,5S)-dethiobiotin + (sulfur carrier)-SH + 2 reduced [2Fe-2S]-[ferredoxin] + 2 S-adenosyl-L-methionine = (sulfur carrier)-H + biotin + 2 5'-deoxyadenosine + 2 L-methionine + 2 oxidized [2Fe-2S]-[ferredoxin]. Its pathway is cofactor biosynthesis; biotin biosynthesis; biotin from 7,8-diaminononanoate: step 2/2. Functionally, catalyzes the conversion of dethiobiotin (DTB) to biotin by the insertion of a sulfur atom into dethiobiotin via a radical-based mechanism. The protein is Biotin synthase of Synechococcus sp. (strain JA-3-3Ab) (Cyanobacteria bacterium Yellowstone A-Prime).